A 453-amino-acid polypeptide reads, in one-letter code: Growth/differentiation factor 9 (453 aa).

The first 27 residues, 1-27 (MALPNKFFLWFCCFAWLCFPISLDSLP), serve as a signal peptide directing secretion. The propeptide occupies 28–318 (SRGEAQIVAR…EGVRSSRHRR (291 aa)). N-linked (GlcNAc...) asparagine glycans are attached at residues asparagine 163, asparagine 236, asparagine 255, and asparagine 269. The interval 282-328 (LHPKRKPSQGPDQRRELSAYPVGEEAAEGVRSSRHRRDQESVSSELK) is disordered. Residues 318–328 (RDQESVSSELK) show a composition bias toward basic and acidic residues. N-linked (GlcNAc...) asparagine glycosylation is present at asparagine 337. 3 disulfides stabilise this stretch: cysteine 352-cysteine 418, cysteine 381-cysteine 450, and cysteine 385-cysteine 452.

This sequence belongs to the TGF-beta family. As to quaternary structure, homodimer or heterodimer (Potential). But, in contrast to other members of this family, cannot be disulfide-linked. Post-translationally, phosphorylated; phosphorylation is critical for GDF9 function.

It localises to the secreted. Required for ovarian folliculogenesis. This chain is Growth/differentiation factor 9 (GDF9), found in Capra hircus (Goat).